Here is a 637-residue protein sequence, read N- to C-terminus: Pyrethroid hydrolase (637 aa).

It catalyses the reaction (-)-trans-permethrin + H2O = (3-phenoxyphenyl)methanol + (1S,3R)-3-(2,2-dichlorovinyl)-2,2-dimethylcyclopropanecarboxylate + H(+). With respect to regulation, inhibited by Hg(2+), Ag(+) and rho-chloromercuribenzoate. Catalyzes the hydrolysis of pyrethroids pesticides. Hydrolyzes cis-permethrin at approximately equal rate to trans-permethrin. This is Pyrethroid hydrolase (estP) from Klebsiella sp.